The following is a 270-amino-acid chain: Tryptophan synthase alpha chain (270 aa).

Active-site proton acceptor residues include E57 and D68.

Belongs to the TrpA family. Tetramer of two alpha and two beta chains.

The enzyme catalyses (1S,2R)-1-C-(indol-3-yl)glycerol 3-phosphate + L-serine = D-glyceraldehyde 3-phosphate + L-tryptophan + H2O. Its pathway is amino-acid biosynthesis; L-tryptophan biosynthesis; L-tryptophan from chorismate: step 5/5. Functionally, the alpha subunit is responsible for the aldol cleavage of indoleglycerol phosphate to indole and glyceraldehyde 3-phosphate. In Mycobacterium leprae (strain Br4923), this protein is Tryptophan synthase alpha chain.